The following is a 153-amino-acid chain: Superoxide dismutase [Cu-Zn] (153 aa).

Residues histidine 46, histidine 48, and histidine 63 each coordinate Cu cation. An intrachain disulfide couples cysteine 57 to cysteine 146. The Zn(2+) site is built by histidine 63, histidine 71, histidine 80, and aspartate 83. Residue histidine 120 participates in Cu cation binding.

It belongs to the Cu-Zn superoxide dismutase family. Homodimer. Cu cation is required as a cofactor. It depends on Zn(2+) as a cofactor.

The protein resides in the cytoplasm. The enzyme catalyses 2 superoxide + 2 H(+) = H2O2 + O2. Functionally, destroys radicals which are normally produced within the cells and which are toxic to biological systems. In Solidago canadensis var. scabra (Tall goldenrod), this protein is Superoxide dismutase [Cu-Zn] (SODCC).